The primary structure comprises 315 residues: Ribose-phosphate pyrophosphokinase (315 aa).

ATP contacts are provided by residues 41-43 (DGE) and 100-101 (RQ). The Mg(2+) site is built by histidine 134 and aspartate 173. Residue lysine 196 is part of the active site. D-ribose 5-phosphate-binding positions include arginine 198, aspartate 222, and 226-230 (DTAGT).

It belongs to the ribose-phosphate pyrophosphokinase family. Class I subfamily. Homohexamer. It depends on Mg(2+) as a cofactor.

The protein resides in the cytoplasm. It carries out the reaction D-ribose 5-phosphate + ATP = 5-phospho-alpha-D-ribose 1-diphosphate + AMP + H(+). The protein operates within metabolic intermediate biosynthesis; 5-phospho-alpha-D-ribose 1-diphosphate biosynthesis; 5-phospho-alpha-D-ribose 1-diphosphate from D-ribose 5-phosphate (route I): step 1/1. Involved in the biosynthesis of the central metabolite phospho-alpha-D-ribosyl-1-pyrophosphate (PRPP) via the transfer of pyrophosphoryl group from ATP to 1-hydroxyl of ribose-5-phosphate (Rib-5-P). The protein is Ribose-phosphate pyrophosphokinase of Bacillus caldolyticus.